We begin with the raw amino-acid sequence, 215 residues long: Serine acetyltransferase (215 aa).

Belongs to the transferase hexapeptide repeat family.

The protein resides in the cytoplasm. The enzyme catalyses L-serine + acetyl-CoA = O-acetyl-L-serine + CoA. It participates in amino-acid biosynthesis; L-cysteine biosynthesis; L-cysteine from L-serine: step 1/2. This is Serine acetyltransferase (cysE) from Staphylococcus aureus (strain MRSA252).